An 86-amino-acid polypeptide reads, in one-letter code: Cell division topological specificity factor (86 aa).

This sequence belongs to the MinE family.

Its function is as follows. Prevents the cell division inhibition by proteins MinC and MinD at internal division sites while permitting inhibition at polar sites. This ensures cell division at the proper site by restricting the formation of a division septum at the midpoint of the long axis of the cell. This chain is Cell division topological specificity factor, found in Aliivibrio salmonicida (strain LFI1238) (Vibrio salmonicida (strain LFI1238)).